Here is an 83-residue protein sequence, read N- to C-terminus: UPF0512 protein G (83 aa).

It belongs to the UPF0512 family.

This chain is UPF0512 protein G, found in Dictyostelium discoideum (Social amoeba).